The sequence spans 389 residues: Pyruvate dehydrogenase E1 component subunit alpha, somatic form, mitochondrial (389 aa).

A mitochondrion-targeting transit peptide spans 1 to 28 (GKMLAAVSRVLSGVAQKPASRVLVASRT). K62 is modified (N6-acetyllysine; alternate). K62 carries the N6-succinyllysine; alternate modification. Positions 91, 117, 118, 156, 164, 166, 195, 196, 197, 224, and 226 each coordinate pyruvate. Thiamine diphosphate-binding residues include Y117 and R118. The thiamine diphosphate site is built by G164, V166, D195, G196, A197, and N224. Mg(2+) is bound at residue D195. Positions 224 and 226 each coordinate Mg(2+). Position 231 is a phosphoserine; by PDK1 (S231). N6-acetyllysine; alternate is present on K243. K243 carries the N6-succinyllysine; alternate modification. K276 carries the post-translational modification N6-succinyllysine. Thiamine diphosphate is bound at residue H291. S292 carries the post-translational modification Phosphoserine; by PDK1, PDK2, PDK3 and PDK4. Residue S294 is modified to Phosphoserine. Phosphoserine; by PDK1, PDK2, PDK3 and PDK4 is present on S299. Y300 carries the post-translational modification Phosphotyrosine. The residue at position 312 (K312) is an N6-acetyllysine; alternate. Position 312 is an N6-succinyllysine; alternate (K312). 2 positions are modified to N6-acetyllysine: K320 and K335. K384 is modified (N6-succinyllysine).

Heterotetramer of two PDHA1 and two PDHB subunits. The heterotetramer interacts with DLAT, and is part of the multimeric pyruvate dehydrogenase complex that contains multiple copies of pyruvate dehydrogenase (E1), dihydrolipoamide acetyltransferase (DLAT, E2) and lipoamide dehydrogenase (DLD, E3). These subunits are bound to an inner core composed of about 48 DLAT and 12 PDHX molecules. Thiamine diphosphate serves as cofactor. It depends on Mg(2+) as a cofactor. Post-translationally, phosphorylation at Ser-231, Ser-292 and Ser-299 by PDK family kinases inactivates the enzyme; for this phosphorylation at a single site is sufficient. Phosphorylation at Ser-292 interferes with access to active site, and thereby inactivates the enzyme. Dephosphorylation at all three sites, i.e. at Ser-231, Ser-292 and Ser-299, is required for reactivation. In terms of processing, acetylation alters the phosphorylation pattern. Deacetylated by SIRT3.

Its subcellular location is the mitochondrion matrix. It carries out the reaction N(6)-[(R)-lipoyl]-L-lysyl-[protein] + pyruvate + H(+) = N(6)-[(R)-S(8)-acetyldihydrolipoyl]-L-lysyl-[protein] + CO2. With respect to regulation, pyruvate dehydrogenase activity is inhibited by phosphorylation of PDHA1; it is reactivated by dephosphorylation. Functionally, the pyruvate dehydrogenase complex catalyzes the overall conversion of pyruvate to acetyl-CoA and CO(2), and thereby links the glycolytic pathway to the tricarboxylic cycle. This is Pyruvate dehydrogenase E1 component subunit alpha, somatic form, mitochondrial (PDHA1) from Sus scrofa (Pig).